The sequence spans 236 residues: uncharacterized protein (236 aa).

The tract at residues 1 to 73 is disordered; it reads MEPGGSENAA…GGGWGWGNTQ (73 aa).

This is an uncharacterized protein from Homo sapiens (Human).